Here is a 569-residue protein sequence, read N- to C-terminus: Thiol:disulfide interchange protein DsbD (569 aa).

The N-terminal stretch at 1 to 19 (MAQRILTLILLLCSTSAFA) is a signal peptide. Intrachain disulfides connect C122–C128 and C187–C309. 7 consecutive transmembrane segments (helical) span residues 168–188 (LPFS…TPCV), 213–233 (LLTF…GLVV), 248–268 (YVLI…FGLF), 301–321 (IAGL…LLYI), 328–348 (WLGG…LILI), 362–382 (WMEH…VFLL), and 391–411 (GLRL…ITSL). The Thioredoxin domain occupies 430–569 (LVSVRPLQDW…FSAHLRDRQP (140 aa)). A disulfide bond links C484 and C487.

Belongs to the thioredoxin family. DsbD subfamily.

It is found in the cell inner membrane. It carries out the reaction [protein]-dithiol + NAD(+) = [protein]-disulfide + NADH + H(+). It catalyses the reaction [protein]-dithiol + NADP(+) = [protein]-disulfide + NADPH + H(+). Functionally, required to facilitate the formation of correct disulfide bonds in some periplasmic proteins and for the assembly of the periplasmic c-type cytochromes. Acts by transferring electrons from cytoplasmic thioredoxin to the periplasm. This transfer involves a cascade of disulfide bond formation and reduction steps. This chain is Thiol:disulfide interchange protein DsbD, found in Citrobacter koseri (strain ATCC BAA-895 / CDC 4225-83 / SGSC4696).